The chain runs to 196 residues: GTP cyclohydrolase 1 (196 aa).

3 residues coordinate Zn(2+): Cys-84, His-87, and Cys-157.

This sequence belongs to the GTP cyclohydrolase I family. Toroid-shaped homodecamer, composed of two pentamers of five dimers.

The enzyme catalyses GTP + H2O = 7,8-dihydroneopterin 3'-triphosphate + formate + H(+). Its pathway is cofactor biosynthesis; 7,8-dihydroneopterin triphosphate biosynthesis; 7,8-dihydroneopterin triphosphate from GTP: step 1/1. This chain is GTP cyclohydrolase 1, found in Corynebacterium glutamicum (strain ATCC 13032 / DSM 20300 / JCM 1318 / BCRC 11384 / CCUG 27702 / LMG 3730 / NBRC 12168 / NCIMB 10025 / NRRL B-2784 / 534).